The sequence spans 94 residues: Cytochrome b-c1 complex subunit 8, mitochondrial (94 aa).

Residues 2 to 49 (GPPSGKTYMGWWGHMGGPKQKGITSYAVSPYAQKPLQGIFHNAVFNSF) are Mitochondrial matrix-facing. Residues 50-80 (RRFKSQFLYVLIPAGIYWYWWKNGNEYNEFL) form a helical membrane-spanning segment. Topologically, residues 81–94 (YSKAGREELERVNV) are mitochondrial intermembrane.

It belongs to the UQCRQ/QCR8 family. In terms of assembly, component of the ubiquinol-cytochrome c oxidoreductase (cytochrome b-c1 complex, complex III, CIII), a multisubunit enzyme composed of 10 subunits. The complex is composed of 3 respiratory subunits cytochrome b (COB), cytochrome c1 (CYT1) and Rieske protein (RIP1), 2 core protein subunits COR1 and QCR2, and 5 low-molecular weight protein subunits QCR6, QCR7, QCR8, QCR9 and QCR10. The complex exists as an obligatory dimer and forms supercomplexes (SCs) in the inner mitochondrial membrane with a monomer or a dimer of cytochrome c oxidase (complex IV, CIV), resulting in 2 different assemblies (supercomplexes III(2)IV and III(2)IV(2)).

The protein localises to the mitochondrion inner membrane. Component of the ubiquinol-cytochrome c oxidoreductase, a multisubunit transmembrane complex that is part of the mitochondrial electron transport chain which drives oxidative phosphorylation. The respiratory chain contains 3 multisubunit complexes succinate dehydrogenase (complex II, CII), ubiquinol-cytochrome c oxidoreductase (cytochrome b-c1 complex, complex III, CIII) and cytochrome c oxidase (complex IV, CIV), that cooperate to transfer electrons derived from NADH and succinate to molecular oxygen, creating an electrochemical gradient over the inner membrane that drives transmembrane transport and the ATP synthase. The cytochrome b-c1 complex catalyzes electron transfer from ubiquinol to cytochrome c, linking this redox reaction to translocation of protons across the mitochondrial inner membrane, with protons being carried across the membrane as hydrogens on the quinol. In the process called Q cycle, 2 protons are consumed from the matrix, 4 protons are released into the intermembrane space and 2 electrons are passed to cytochrome c. The chain is Cytochrome b-c1 complex subunit 8, mitochondrial (QCR8) from Saccharomyces cerevisiae (strain ATCC 204508 / S288c) (Baker's yeast).